A 1210-amino-acid chain; its full sequence is ATP-dependent helicase/nuclease subunit A (1210 aa).

One can recognise a UvrD-like helicase ATP-binding domain in the interval 27–483 (QKRTAQQIEA…ILLKENFRSQ (457 aa)). 48 to 55 (ASAGSGKT) serves as a coordination point for ATP. The region spanning 512–798 (QLIAGSHAQT…NLMTIHKSKG (287 aa)) is the UvrD-like helicase C-terminal domain.

The protein belongs to the helicase family. AddA subfamily. In terms of assembly, heterodimer of AddA and AddB/RexB. The cofactor is Mg(2+).

The catalysed reaction is Couples ATP hydrolysis with the unwinding of duplex DNA by translocating in the 3'-5' direction.. It catalyses the reaction ATP + H2O = ADP + phosphate + H(+). In terms of biological role, the heterodimer acts as both an ATP-dependent DNA helicase and an ATP-dependent, dual-direction single-stranded exonuclease. Recognizes the chi site generating a DNA molecule suitable for the initiation of homologous recombination. The AddA nuclease domain is required for chi fragment generation; this subunit has the helicase and 3' -&gt; 5' nuclease activities. The chain is ATP-dependent helicase/nuclease subunit A from Streptococcus pyogenes serotype M5 (strain Manfredo).